A 631-amino-acid polypeptide reads, in one-letter code: Phosphomethylpyrimidine synthase (631 aa).

Substrate contacts are provided by residues Asn239, Met268, Tyr297, His333, 353–355 (SRG), 394–397 (DGLR), and Glu433. His437 is a Zn(2+) binding site. Tyr460 provides a ligand contact to substrate. A Zn(2+)-binding site is contributed by His501. Cys581, Cys584, and Cys589 together coordinate [4Fe-4S] cluster.

The protein belongs to the ThiC family. In terms of assembly, homodimer. Requires [4Fe-4S] cluster as cofactor.

The enzyme catalyses 5-amino-1-(5-phospho-beta-D-ribosyl)imidazole + S-adenosyl-L-methionine = 4-amino-2-methyl-5-(phosphooxymethyl)pyrimidine + CO + 5'-deoxyadenosine + formate + L-methionine + 3 H(+). The protein operates within cofactor biosynthesis; thiamine diphosphate biosynthesis. In terms of biological role, catalyzes the synthesis of the hydroxymethylpyrimidine phosphate (HMP-P) moiety of thiamine from aminoimidazole ribotide (AIR) in a radical S-adenosyl-L-methionine (SAM)-dependent reaction. The chain is Phosphomethylpyrimidine synthase from Escherichia coli O139:H28 (strain E24377A / ETEC).